The sequence spans 899 residues: Probable dipeptidyl-aminopeptidase B (899 aa).

A disordered region spans residues 1 to 69 (MKLDRMRVGS…NHNGRTQGNY (69 aa)). At 1–99 (MKLDRMRVGS…NGKSSQRRTL (99 aa)) the chain is on the cytoplasmic side. The span at 32-43 (DSSSTASISLTL) shows a compositional bias: low complexity. A helical; Signal-anchor for type II membrane protein transmembrane segment spans residues 100-120 (IVFWLLVALCVGGWAVAFLFF). At 121-899 (VTSPGNKTST…KYFNLSFLGH (779 aa)) the chain is on the vacuolar side. Over residues 128–139 (TSTSPHSGSNSP) the composition is skewed to polar residues. The interval 128–149 (TSTSPHSGSNSPEGDVTKPGIP) is disordered. Asn212, Asn308, and Asn360 each carry an N-linked (GlcNAc...) asparagine glycan. The active-site Charge relay system is the Ser765. N-linked (GlcNAc...) asparagine glycosylation is found at Asn819, Asn824, and Asn827. Residues Asp842 and His875 each act as charge relay system in the active site. Asn893 carries an N-linked (GlcNAc...) asparagine glycan.

It belongs to the peptidase S9B family.

It localises to the vacuole membrane. The enzyme catalyses Release of an N-terminal dipeptide, Xaa-Yaa-|-Zaa-, from a polypeptide, preferentially when Yaa is Pro, provided Zaa is neither Pro nor hydroxyproline.. Its function is as follows. Type IV dipeptidyl-peptidase which removes N-terminal dipeptides sequentially from polypeptides having unsubstituted N-termini provided that the penultimate residue is proline. The polypeptide is Probable dipeptidyl-aminopeptidase B (DAPB) (Trichophyton verrucosum (strain HKI 0517)).